We begin with the raw amino-acid sequence, 952 residues long: Leucine--tRNA ligase (952 aa).

Positions 66-77 (PYPSGAGLHVGH) match the 'HIGH' region motif. The 'KMSKS' region motif lies at 722-726 (KMGKS). Lys725 contacts ATP.

Belongs to the class-I aminoacyl-tRNA synthetase family.

The protein localises to the cytoplasm. It carries out the reaction tRNA(Leu) + L-leucine + ATP = L-leucyl-tRNA(Leu) + AMP + diphosphate. The sequence is that of Leucine--tRNA ligase from Corynebacterium glutamicum (strain R).